The chain runs to 388 residues: Flap endonuclease 1 (388 aa).

The interval 1–104 (MGILGLSKLI…GELAKRAERR (104 aa)) is N-domain. Asp-34 contributes to the Mg(2+) binding site. 2 residues coordinate DNA: Arg-47 and Arg-70. The Mg(2+) site is built by Asp-86, Glu-158, Glu-160, Asp-179, and Asp-181. The interval 122 to 253 (QIEKFNRRLV…KRAIELIKSY (132 aa)) is I-domain. A DNA-binding site is contributed by Glu-158. Positions 231 and 233 each coordinate DNA. Asp-233 lines the Mg(2+) pocket. The tract at residues 336 to 344 (TQVRLDSFF) is interaction with PCNA. A disordered region spans residues 355–388 (AAAKRKAEESKKSANSKKAKIGGGSGAGRGRRPK).

The protein belongs to the XPG/RAD2 endonuclease family. FEN1 subfamily. As to quaternary structure, interacts with PCNA. Three molecules of FEN1 bind to one PCNA trimer with each molecule binding to one PCNA monomer. PCNA stimulates the nuclease activity without altering cleavage specificity. Requires Mg(2+) as cofactor. Post-translationally, phosphorylated. Phosphorylation upon DNA damage induces relocalization to the nuclear plasma.

The protein localises to the nucleus. The protein resides in the nucleolus. It localises to the nucleoplasm. It is found in the mitochondrion. In terms of biological role, structure-specific nuclease with 5'-flap endonuclease and 5'-3' exonuclease activities involved in DNA replication and repair. During DNA replication, cleaves the 5'-overhanging flap structure that is generated by displacement synthesis when DNA polymerase encounters the 5'-end of a downstream Okazaki fragment. It enters the flap from the 5'-end and then tracks to cleave the flap base, leaving a nick for ligation. Also involved in the long patch base excision repair (LP-BER) pathway, by cleaving within the apurinic/apyrimidinic (AP) site-terminated flap. Acts as a genome stabilization factor that prevents flaps from equilibrating into structures that lead to duplications and deletions. Also possesses 5'-3' exonuclease activity on nicked or gapped double-stranded DNA, and exhibits RNase H activity. Also involved in replication and repair of rDNA and in repairing mitochondrial DNA. The sequence is that of Flap endonuclease 1 from Drosophila grimshawi (Hawaiian fruit fly).